A 195-amino-acid polypeptide reads, in one-letter code: CASP-like protein 1B1 (195 aa).

The Cytoplasmic segment spans residues 1–15; that stretch reads MAKLALAATSGKSCK. A helical membrane pass occupies residues 16–36; it reads ILLGLRLLAFSATLSAAIVMG. Residues 37–67 are Extracellular-facing; that stretch reads LNKETETFVVGKVGNTPIKATFTAKFDHTPA. A helical transmembrane segment spans residues 68 to 88; sequence FVFFVVANAMVSFHNLLMIAL. Over 89-104 the chain is Cytoplasmic; sequence QIFGGKMEFTGFRLLS. Residues 105 to 125 form a helical membrane-spanning segment; it reads VAILDMLNVTLISAAANAAAF. The Extracellular portion of the chain corresponds to 126–154; sequence MAEVGKNGNKHARWDKICDRFATYCDHGA. A helical transmembrane segment spans residues 155–175; it reads GALIAAFAGVILMLIISAASI. Over 176-195 the chain is Cytoplasmic; it reads SRLAQQNKCCSTTASPSVVP.

The protein belongs to the Casparian strip membrane proteins (CASP) family. As to quaternary structure, homodimer and heterodimers.

The protein localises to the cell membrane. This is CASP-like protein 1B1 from Arabidopsis lyrata subsp. lyrata (Lyre-leaved rock-cress).